The sequence spans 686 residues: MFSPVLFRFSKPNSFLVLLFFLSYIHFLPCAQSQREPCDTLFRCGDLTAGFPFWGVARPQPCGHPSLGLHCQKQTNSTSLIISSLMYRVLEVNTTTSTLKLVRQDFSGPFCSASFSGATLTPELFELLPDYKTLSAYYLCNPSLHYPAKFICPNKGVGSIHQDDLYHNHCGGIFNITVPIGYAPEEGALNVTNLESVLKKGFEVKLSIDERPCQECKTNGGICAYHVATPVCCKTNSSSEVNCTPMMPSGSSAHAGLSKKGKIGIGFASGFLGATLIGGCLLCIFIRRRKKLATQYTNKGLSTTTPYSSNYTMSNTPTSTTISGSNHSLVPSISNLGNGSVYSGIQVFSYEELEEATENFSKELGDGGFGTVYYGTLKDGRAVAVKRLFERSLKRVEQFKNEIDILKSLKHPNLVILYGCTTRHSRELLLVYEYISNGTLAEHLHGNQAQSRPICWPARLQIAIETASALSYLHASGIIHRDVKTTNILLDSNYQVKVADFGLSRLFPMDQTHISTAPQGTPGYVDPEYYQCYRLNEKSDVYSFGVVLSELISSKEAVDITRHRHDINLANMAISKIQNDAVHELADLSLGFARDPSVKKMMSSVAELAFRCLQQERDVRPSMDEIVEVLRVIQKDGISDSKDVVVEIDVNGGDDVGLLKHGVPPPLSPETDKTTASSSNTTASSF.

The N-terminal stretch at 1–33 (MFSPVLFRFSKPNSFLVLLFFLSYIHFLPCAQS) is a signal peptide. Over 34-264 (QREPCDTLFR…AGLSKKGKIG (231 aa)) the chain is Extracellular. N-linked (GlcNAc...) asparagine glycans are attached at residues N76, N93, N175, N190, and N236. A helical membrane pass occupies residues 265–285 (IGFASGFLGATLIGGCLLCIF). Over 286-686 (IRRRKKLATQ…SSSNTTASSF (401 aa)) the chain is Cytoplasmic. The Protein kinase domain occupies 358-633 (ENFSKELGDG…DEIVEVLRVI (276 aa)). ATP contacts are provided by residues 364–372 (LGDGGFGTV) and K386. Y432 is modified (phosphotyrosine). The active-site Proton acceptor is D482. S515 carries the phosphoserine modification. Phosphothreonine is present on residues T516 and T521. Y529 is modified (phosphotyrosine). A disordered region spans residues 657–686 (GLLKHGVPPPLSPETDKTTASSSNTTASSF). The segment covering 674-686 (TTASSSNTTASSF) has biased composition (low complexity).

This sequence belongs to the protein kinase superfamily. Ser/Thr protein kinase family.

It localises to the cell membrane. It catalyses the reaction L-seryl-[protein] + ATP = O-phospho-L-seryl-[protein] + ADP + H(+). The enzyme catalyses L-threonyl-[protein] + ATP = O-phospho-L-threonyl-[protein] + ADP + H(+). In Arabidopsis thaliana (Mouse-ear cress), this protein is LEAF RUST 10 DISEASE-RESISTANCE LOCUS RECEPTOR-LIKE PROTEIN KINASE-like 1.3.